Here is a 470-residue protein sequence, read N- to C-terminus: Diaminobutyrate--2-oxoglutarate aminotransferase (470 aa).

Position 304 is an N6-(pyridoxal phosphate)lysine (K304).

Belongs to the class-III pyridoxal-phosphate-dependent aminotransferase family. Requires pyridoxal 5'-phosphate as cofactor.

The catalysed reaction is L-2,4-diaminobutanoate + 2-oxoglutarate = L-aspartate 4-semialdehyde + L-glutamate. It participates in siderophore biosynthesis; rhizobactin biosynthesis. The protein is Diaminobutyrate--2-oxoglutarate aminotransferase (rhbA) of Rhizobium meliloti (strain 1021) (Ensifer meliloti).